The sequence spans 256 residues: MTTATDRQAFHARLLEIGKERYHDKHPFHAMLHGGGCTTTQVRAWVINRYYYQSRIPMKDAAFLSRCDDPDMRRAWRSRIEDHDGGVEEGGGIRRWLRLAEAVGLDPAYVGSARGVLPSTRFAVDAYVSFVREKPLLEAVASSLTELFAPKIHSERIAGLLEHYAFADDAALAYFRQRLAEVPRDVEFGLAYVLDHADTREKQDAAAQALTFKTDVLWAQLDALYSAYVTPGRIPPGAWDGREGVIREPRAREAAE.

The protein belongs to the PqqC family.

It catalyses the reaction 6-(2-amino-2-carboxyethyl)-7,8-dioxo-1,2,3,4,7,8-hexahydroquinoline-2,4-dicarboxylate + 3 O2 = pyrroloquinoline quinone + 2 H2O2 + 2 H2O + H(+). The protein operates within cofactor biosynthesis; pyrroloquinoline quinone biosynthesis. Its function is as follows. Ring cyclization and eight-electron oxidation of 3a-(2-amino-2-carboxyethyl)-4,5-dioxo-4,5,6,7,8,9-hexahydroquinoline-7,9-dicarboxylic-acid to PQQ. The chain is Pyrroloquinoline-quinone synthase from Rhizobium meliloti (strain 1021) (Ensifer meliloti).